Reading from the N-terminus, the 419-residue chain is UDP-N-acetylglucosamine 1-carboxyvinyltransferase (419 aa).

22 to 23 (KN) contacts phosphoenolpyruvate. A UDP-N-acetyl-alpha-D-glucosamine-binding site is contributed by Arg-91. The active-site Proton donor is Cys-115. At Cys-115 the chain carries 2-(S-cysteinyl)pyruvic acid O-phosphothioketal. UDP-N-acetyl-alpha-D-glucosamine is bound by residues 120–124 (RPVDL), 160–163 (KVSV), Asp-305, and Val-327.

Belongs to the EPSP synthase family. MurA subfamily.

The protein localises to the cytoplasm. It carries out the reaction phosphoenolpyruvate + UDP-N-acetyl-alpha-D-glucosamine = UDP-N-acetyl-3-O-(1-carboxyvinyl)-alpha-D-glucosamine + phosphate. It participates in cell wall biogenesis; peptidoglycan biosynthesis. Cell wall formation. Adds enolpyruvyl to UDP-N-acetylglucosamine. This chain is UDP-N-acetylglucosamine 1-carboxyvinyltransferase, found in Salmonella agona (strain SL483).